The primary structure comprises 305 residues: Autophagy-related protein 14 (305 aa).

Residues 34 to 147 are a coiled coil; that stretch reads KMNLLILRQE…LDTLSHILAR (114 aa).

Belongs to the ATG14 family. In terms of assembly, component of the autophagy-specific VPS34 PI3-kinase complex I.

The protein resides in the preautophagosomal structure membrane. It localises to the vacuole membrane. Required for cytoplasm to vacuole transport (Cvt) and autophagy as a part of the autophagy-specific VPS34 PI3-kinase complex I. This complex is essential to recruit the ATG8-phosphatidylinositol conjugate and the ATG12-ATG5 conjugate to the pre-autophagosomal structure. ATG14 mediates the specific binding of the VPS34 PI3-kinase complex I to the preautophagosomal structure (PAS). The polypeptide is Autophagy-related protein 14 (Kluyveromyces marxianus (strain DMKU3-1042 / BCC 29191 / NBRC 104275) (Yeast)).